Here is a 4015-residue protein sequence, read N- to C-terminus: Hybrid PKS-NRPS synthetase iccA (4015 aa).

Polar residues predominate over residues 1-12 (MAANDSNNQTKP). The interval 1–20 (MAANDSNNQTKPQLPEEPVA) is disordered. Residues 16 to 445 (EEPVAIVGSS…GTNAHVIIES (430 aa)) form the Ketosynthase family 3 (KS3) domain. Active-site for beta-ketoacyl synthase activity residues include cysteine 190, histidine 327, and histidine 365. The segment at 560–885 (VFTGQGAQWP…LKRGASDVEA (326 aa)) is malonyl-CoA:ACP transacylase (MAT) domain. The segment at 954 to 1091 (HELLGRRTPD…GRLSVHLGEA (138 aa)) is N-terminal hotdog fold. A dehydratase (DH) domain region spans residues 954-1260 (HELLGRRTPD…TTKMVGEQDA (307 aa)). The region spanning 954–1261 (HELLGRRTPD…TKMVGEQDAS (308 aa)) is the PKS/mFAS DH domain. The active-site Proton acceptor; for dehydratase activity is histidine 986. Residues 1106–1261 (LVNINTDRAY…TKMVGEQDAS (156 aa)) form a C-terminal hotdog fold region. The active-site Proton donor; for dehydratase activity is aspartate 1165. Residues 1400–1598 (KDDMLNRFYM…YSGADMVVHD (199 aa)) form a methyltransferase (MT) domain region. The interval 2120 to 2261 (KTYLMVGAAG…STATTIGNIG (142 aa)) is ketoreductase (KR) domain. Positions 2379-2405 (STLQNDSSQTGGTGNGSSVRRQVEEAQ) are disordered. Residues 2409 to 2488 (EAVDAVLDGF…QICTTAAKKV (80 aa)) enclose the Carrier 1 domain. Serine 2448 is subject to O-(pantetheine 4'-phosphoryl)serine. Over residues 2498–2515 (EDAVAEEGGREAASKKEP) the composition is skewed to basic and acidic residues. Disordered stretches follow at residues 2498–2529 (EDAVAEEGGREAASKKEPAPAASAPTPAPVAP) and 2545–2597 (TISE…VRDE). Positions 2553 to 2569 (SAFSNKGSSSSATGASS) are enriched in low complexity. Positions 2582-2597 (TSKDQSHVRPETVRDE) are enriched in basic and acidic residues. A condensation (C) domain region spans residues 2598–3029 (RMSPAQARIW…HVKLKDCVIH (432 aa)). The tract at residues 3063–3459 (LKSPKNAAIQ…GTLLCLGRLD (397 aa)) is adenylation (A) (KR) domain. A reductase (RED) domain region spans residues 3063 to 3459 (LKSPKNAAIQ…GTLLCLGRLD (397 aa)). The 80-residue stretch at 3572–3651 (EKMNIREGEL…EMALCVDEQR (80 aa)) folds into the Carrier 2 domain. Serine 3611 bears the O-(pantetheine 4'-phosphoryl)serine mark.

In the C-terminal section; belongs to the NRP synthetase family.

The catalysed reaction is L-tyrosine + holo-[ACP] + 7 malonyl-CoA + acetyl-CoA + 8 AH2 + 2 S-adenosyl-L-methionine + ATP + 4 H(+) = N-[(4E,6E,10S,12Z,14E)-6,10-dimethyl-3-oxohexadeca-4,6,12,14-tetraenoyl]-L-tyrosyl-[ACP] + 8 A + AMP + 2 S-adenosyl-L-homocysteine + 7 CO2 + diphosphate + 8 CoA + 6 H2O. It participates in mycotoxin biosynthesis. In terms of biological role, hybrid PKS-NRPS synthetase; part of the gene cluster that mediates the biosynthesis of ilicicolin H, a 4-hydroxy-2-pyridonealkaloid that has potent and broad antifungal activities by inhibiting the mitochondrial respiration chain. IccA assembles the backbone of ilicicolin H. The PKS portion and trans-acting enoyl reductase iccB work together to construct an octaketide, and two methyl groups are introduced by the MT domain during the chain assembly. The nascent chain is then condensed with tyrosine, catalyzed by the C domain, and the resulting PKS-NRPS hybrid is offloaded by the RED domain to form an advanced tetramic acid intermediate. The biosynthesis of ilicicolin H starts with formation of the tetramic acid by the hybrid PKS-NRPS synthetase iccA with the partnering trans-enoyl reductase iccB since iccA lacks a designated enoylreductase (ER) domain. The cytochrome P450 monooxygenase iccC then catalyzes the ring expansion of the tetramate to the acyclic 2-pyridone. The pericyclase iccD further converts the acyclic 2-pyridone into 8-epi-ilicicolin H. Finally, the epimerase iccE converts 8-epi-ilicicolin H into ilicicolin H via epimerization. IccA to iccE are sufficient for ilicicolin H biosynthesis and the roles of the remaining enzymes, iccF, iccG and iccH within the pathway have still to be determined. This Talaromyces variabilis (Penicillium variabile) protein is Hybrid PKS-NRPS synthetase iccA.